The sequence spans 413 residues: Hemolin (413 aa).

The N-terminal stretch at 1–19 (MAFKSIAVLSACIIVGSAL) is a signal peptide. Ig-like C2-type domains are found at residues 25 to 112 (PVLK…RVIS), 122 to 211 (PAKT…EEVV), 233 to 322 (PQYV…LKLT), and 327 to 413 (PKYE…VQVN). 4 disulfides stabilise this stretch: Cys-46-Cys-97, Cys-140-Cys-199, Cys-252-Cys-305, and Cys-349-Cys-395. A glycan (N-linked (GlcNAc...) asparagine) is linked at Asn-283.

This sequence belongs to the hemolin family. In terms of tissue distribution, hemolymph.

The protein resides in the secreted. It is found in the extracellular space. In terms of biological role, insect-immune protein. Forms a protein complex at the bacterial surface. Can inhibit hemocyte aggregation. The polypeptide is Hemolin (Hyalophora cecropia (Cecropia moth)).